A 356-amino-acid polypeptide reads, in one-letter code: MFS-type transporter tazK (356 aa).

9 consecutive transmembrane segments (helical) span residues 12-32 (LPFFLGYVLFVLSQIPVALGH), 42-62 (FLGGVTSSVCPAITGGWLADF), 69-89 (GVAVAIFAATTLVGPSIGAIT), 102-122 (MTAWTTMILGIVSGVAGFIIL), 178-198 (ILLSMTIYISFTFGLIYLLFV), 211-231 (GAIDGTLPLLSICAGIIVGAF), 257-277 (LHPMIVGAVSLAIGLLWFAWT), 288-308 (ILAGIPIGVGVQVILLQSLAY), and 320-340 (AISGTMIVRSLVGGTFPLFAP).

It belongs to the major facilitator superfamily. CAR1 family.

The protein resides in the membrane. Functionally, MFS-type transporter; part of the gene cluster that mediates the biosynthesis of azaterrilone A and other azaphilones, a class of fungal metabolites characterized by a highly oxygenated pyrano-quinone bicyclic core and exhibiting a broad range of bioactivities. The sequence is that of MFS-type transporter tazK from Aspergillus terreus (strain NIH 2624 / FGSC A1156).